Consider the following 323-residue polypeptide: Probable cell division protein WhiA (323 aa).

The segment at residues 275-309 (TLKELGEMLTTGQVSKSGINHRLRKLDQIAERLRS) is a DNA-binding region (H-T-H motif).

Belongs to the WhiA family.

Its function is as follows. Involved in cell division and chromosome segregation. The polypeptide is Probable cell division protein WhiA (Listeria innocua serovar 6a (strain ATCC BAA-680 / CLIP 11262)).